Consider the following 602-residue polypeptide: Elongation factor 4 (602 aa).

Positions 8 to 189 (KNIRNFSIIA…KIITTIPAPS (182 aa)) constitute a tr-type G domain. GTP contacts are provided by residues 20–25 (DHGKST) and 136–139 (NKID).

Belongs to the TRAFAC class translation factor GTPase superfamily. Classic translation factor GTPase family. LepA subfamily.

It localises to the cell inner membrane. The enzyme catalyses GTP + H2O = GDP + phosphate + H(+). Functionally, required for accurate and efficient protein synthesis under certain stress conditions. May act as a fidelity factor of the translation reaction, by catalyzing a one-codon backward translocation of tRNAs on improperly translocated ribosomes. Back-translocation proceeds from a post-translocation (POST) complex to a pre-translocation (PRE) complex, thus giving elongation factor G a second chance to translocate the tRNAs correctly. Binds to ribosomes in a GTP-dependent manner. The chain is Elongation factor 4 from Helicobacter pylori (strain G27).